The following is a 306-amino-acid chain: Oxygen-dependent coproporphyrinogen-III oxidase (306 aa).

S93 is a substrate binding site. H97 and H107 together coordinate a divalent metal cation. H107 functions as the Proton donor in the catalytic mechanism. Position 109-111 (109-111 (NVR)) interacts with substrate. 2 residues coordinate a divalent metal cation: H146 and H176. Residues 241–276 (YVEYNLVYDRGTLFGLQSGGRTESILMSLPPQVAWG) are important for dimerization. 259 to 261 (GGR) serves as a coordination point for substrate.

Belongs to the aerobic coproporphyrinogen-III oxidase family. Homodimer. It depends on a divalent metal cation as a cofactor.

It is found in the cytoplasm. It catalyses the reaction coproporphyrinogen III + O2 + 2 H(+) = protoporphyrinogen IX + 2 CO2 + 2 H2O. Its pathway is porphyrin-containing compound metabolism; protoporphyrin-IX biosynthesis; protoporphyrinogen-IX from coproporphyrinogen-III (O2 route): step 1/1. Functionally, involved in the heme biosynthesis. Catalyzes the aerobic oxidative decarboxylation of propionate groups of rings A and B of coproporphyrinogen-III to yield the vinyl groups in protoporphyrinogen-IX. The protein is Oxygen-dependent coproporphyrinogen-III oxidase of Stutzerimonas stutzeri (strain A1501) (Pseudomonas stutzeri).